We begin with the raw amino-acid sequence, 64 residues long: Large ribosomal subunit protein bL35c (64 aa).

Belongs to the bacterial ribosomal protein bL35 family.

It localises to the plastid. The protein localises to the chloroplast. This chain is Large ribosomal subunit protein bL35c, found in Thalassiosira pseudonana (Marine diatom).